Here is a 411-residue protein sequence, read N- to C-terminus: MGEKRKTRQAEVNIGMVGHVDHGKTTLTKALTGVWTDTHSEELRRGITIKIGFADAEIRRCSNCGRYSTSPICPYCGHETEFIRRVSFIDSPGHEALMTTMLAGASLMDGAILVIAANEPCPRPQTREHLMALQIIGQKNIIIAQNKIELVDKEKALENYRQIKEFIKGTVAENAPIIPISALHGANIDVLVKAIEEFIPTPKRDSNKPPKMLVLRSFDVNKPGTPPEKLVGGVLGGSIVQGKLKVGDEIEIRPGVPYEEHGRIKYEPITTEIVSLQAGGQFVEEAYPGGLVGIGTKLDPYLTKGDLMAGNVVGKPGKLPPVWTDLRLEVHLLERVVGTEQELNVEPIKRKEVLLLNVGTARTMGLVTALGKDEIELKLQIPVCAEPGERVAISRQIGSRWRLIGYGIIKE.

Residues 9–203 (QAEVNIGMVG…AIEEFIPTPK (195 aa)) enclose the tr-type G domain. A G1 region spans residues 18 to 25 (GHVDHGKT). Positions 21, 25, 46, and 48 each coordinate Mg(2+). 21-26 (DHGKTT) is a binding site for GTP. Residues 46–50 (GITIK) form a G2 region. Zn(2+) is bound by residues Cys61, Cys64, Cys73, and Cys76. The interval 90–93 (DSPG) is G3. GTP contacts are provided by residues 146-149 (NKIE) and 181-183 (SAL). Residues 146-149 (NKIE) form a G4 region. Positions 181–183 (SAL) are G5.

The protein belongs to the TRAFAC class translation factor GTPase superfamily. Classic translation factor GTPase family. EIF2G subfamily. In terms of assembly, heterotrimer composed of an alpha, a beta and a gamma chain. The cofactor is Mg(2+).

The catalysed reaction is GTP + H2O = GDP + phosphate + H(+). Its function is as follows. eIF-2 functions in the early steps of protein synthesis by forming a ternary complex with GTP and initiator tRNA. The protein is Translation initiation factor 2 subunit gamma of Pyrococcus furiosus (strain ATCC 43587 / DSM 3638 / JCM 8422 / Vc1).